The following is a 346-amino-acid chain: UDP-N-acetylenolpyruvoylglucosamine reductase (346 aa).

An FAD-binding PCMH-type domain is found at 23 to 194 (FDVRARLACR…VSVTFRLPKV (172 aa)). Arg170 is an active-site residue. Ser246 acts as the Proton donor in catalysis. Glu342 is an active-site residue.

This sequence belongs to the MurB family. FAD serves as cofactor.

The protein localises to the cytoplasm. It carries out the reaction UDP-N-acetyl-alpha-D-muramate + NADP(+) = UDP-N-acetyl-3-O-(1-carboxyvinyl)-alpha-D-glucosamine + NADPH + H(+). The protein operates within cell wall biogenesis; peptidoglycan biosynthesis. Its function is as follows. Cell wall formation. This Paraburkholderia phymatum (strain DSM 17167 / CIP 108236 / LMG 21445 / STM815) (Burkholderia phymatum) protein is UDP-N-acetylenolpyruvoylglucosamine reductase.